A 589-amino-acid polypeptide reads, in one-letter code: Kelch-like protein 25 (589 aa).

A BTB domain is found at 46-114 (TDVTLWAGDR…AYSSRIVINE (69 aa)). Residues 149–250 (CLGMMVLSDA…LPSDCLKKAV (102 aa)) enclose the BACK domain. 6 Kelch repeats span residues 296-340 (TLLI…AIGC), 341-388 (KVYV…ELEN), 389-444 (CLYV…SAKL), 446-492 (LFVF…VLGS), 493-538 (QIFI…ASGN), and 539-585 (KLYV…STWK).

In terms of assembly, component of the BCR(KLHL25) E3 ubiquitin ligase complex, at least composed of CUL3, KLHL25 and RBX1.

The protein operates within protein modification; protein ubiquitination. In terms of biological role, substrate-specific adapter of a BCR (BTB-CUL3-RBX1) E3 ubiquitin ligase complex involved in various processes, such as translation homeostasis and lipid synthesis. The BCR(KLHL25) ubiquitin ligase complex acts by mediating ubiquitination of hypophosphorylated EIF4EBP1 (4E-BP1): ubiquitination and subsequent degradation of hypophosphorylated EIF4EBP1 (4E-BP1) probably serves as a homeostatic mechanism to maintain translation and prevent eIF4E inhibition when eIF4E levels are low. The BCR(KLHL25) complex does not target EIF4EBP1 (4E-BP1) when it is hyperphosphorylated or associated with eIF4E. The BCR(KLHL25) complex also acts as a regulator of lipid synthesis by mediating ubiquitination and degradation of ACLY, thereby inhibiting lipid synthesis. BCR(KLHL25)-mediated degradation of ACLY promotes fatty acid oxidation and is required for differentiation of inducible regulatory T (iTreg) cells. This chain is Kelch-like protein 25, found in Rattus norvegicus (Rat).